The following is a 301-amino-acid chain: MTTKHDVKTFQGFILTLQEYWAQQGCAIVQPLDMEVGAGTFHPQTFLRSLGPEPMSSAYVQPSRRPTDGRYGENPNRLQHYYQFQVVLKPSPDNIQELYLGSLQALGIDTQIHDIRFVEDNWESPTLGAWGLGWEVWLNGMEVTQFTYFQQVGGLECSPVTGEITYGLERLAMYIQGVDSVYDLVWTDGPMGRITYGDVFHQNEVEQSTYNFEHADVDFMFALFDQCEKMCQHLLSLEKPLPLPAYEQVMKASHAFNLLDARHAISVTERQRYILRVRTMAKAVAESYYQAREALGFPMCK.

This sequence belongs to the class-II aminoacyl-tRNA synthetase family. In terms of assembly, tetramer of two alpha and two beta subunits.

Its subcellular location is the cytoplasm. The enzyme catalyses tRNA(Gly) + glycine + ATP = glycyl-tRNA(Gly) + AMP + diphosphate. In Shewanella oneidensis (strain ATCC 700550 / JCM 31522 / CIP 106686 / LMG 19005 / NCIMB 14063 / MR-1), this protein is Glycine--tRNA ligase alpha subunit.